Reading from the N-terminus, the 238-residue chain is Ribitol-5-phosphate cytidylyltransferase (238 aa).

Residues 7–10 and 81–87 each bind CTP; these read LAGG and GSDRNET.

It belongs to the IspD/TarI cytidylyltransferase family. TarI subfamily.

The enzyme catalyses D-ribitol 5-phosphate + CTP + H(+) = CDP-L-ribitol + diphosphate. It functions in the pathway cell wall biogenesis; poly(ribitol phosphate) teichoic acid biosynthesis. Functionally, catalyzes the transfer of the cytidylyl group of CTP to D-ribitol 5-phosphate. The polypeptide is Ribitol-5-phosphate cytidylyltransferase (Staphylococcus saprophyticus subsp. saprophyticus (strain ATCC 15305 / DSM 20229 / NCIMB 8711 / NCTC 7292 / S-41)).